The primary structure comprises 153 residues: Large ribosomal subunit protein uL15 (153 aa).

The protein belongs to the universal ribosomal protein uL15 family. In terms of assembly, part of the 50S ribosomal subunit.

In terms of biological role, binds to the 23S rRNA. The protein is Large ribosomal subunit protein uL15 of Pelagibacter ubique (strain HTCC1062).